Reading from the N-terminus, the 397-residue chain is Ribosomal RNA large subunit methyltransferase I (397 aa).

One can recognise a PUA domain in the interval 2–79; that stretch reads TAAIYLVKGR…KEEINKAFFV (78 aa).

It belongs to the methyltransferase superfamily. RlmI family.

It localises to the cytoplasm. The catalysed reaction is cytidine(1962) in 23S rRNA + S-adenosyl-L-methionine = 5-methylcytidine(1962) in 23S rRNA + S-adenosyl-L-homocysteine + H(+). Functionally, specifically methylates the cytosine at position 1962 (m5C1962) of 23S rRNA. This Vibrio parahaemolyticus serotype O3:K6 (strain RIMD 2210633) protein is Ribosomal RNA large subunit methyltransferase I.